Reading from the N-terminus, the 453-residue chain is Choline kinase alpha (453 aa).

The disordered stretch occupies residues 22–81 (CGGSAAPTPGVGQQRDAAGELESKQLGGRSQPLALPPPPPPPLPLPPPPSPPLADEQPEP). Residues 55 to 73 (ALPPPPPPPLPLPPPPSPP) are compositionally biased toward pro residues. At Ser71 the chain carries Phosphoserine. Residues 113-119 (RGGLSNM), Arg142, and 203-209 (QFIPSRR) each bind ATP. 115 to 117 (GLS) contributes to the phosphocholine binding site. Lys243 is modified (N6-acetyllysine). Ser275 carries the phosphoserine modification. Residues Gln304 and Asp326 each coordinate ATP.

The protein belongs to the choline/ethanolamine kinase family. Heterodimer with CHKB. Homodimer. As to quaternary structure, monomer; acetylation by KAT5 promotes dissociation of the homodimer and monomerization. Post-translationally, phosphorylated at Ser-275 by AMPK in response to glucose deprivation, leading to localization to lipid droplets. Acetylated by KAT5 at Lys-243 following phosphorylation by AMPK, leading to monomerization and conversion into a tyrosine-protein kinase. In terms of tissue distribution, testis, brain, lung, kidney and liver.

It is found in the cytoplasm. The protein localises to the cytosol. It localises to the lipid droplet. It catalyses the reaction choline + ATP = phosphocholine + ADP + H(+). It carries out the reaction ethanolamine + ATP = phosphoethanolamine + ADP + H(+). The catalysed reaction is L-tyrosyl-[protein] + ATP = O-phospho-L-tyrosyl-[protein] + ADP + H(+). It functions in the pathway phospholipid metabolism; phosphatidylcholine biosynthesis; phosphocholine from choline: step 1/1. The protein operates within phospholipid metabolism; phosphatidylethanolamine biosynthesis; phosphatidylethanolamine from ethanolamine: step 1/3. Plays a key role in phospholipid biosynthesis by catalyzing the phosphorylation of free choline to phosphocholine, the first step in phosphatidylcholine biosynthesis. Also phosphorylates ethanolamine, thereby contributing to phosphatidylethanolamine biosynthesis. Has higher activity with choline. Functionally, this isoform plays a key role in lipolysis of lipid droplets following glucose deprivation. In response to glucose deprivation, phosphorylated by AMPK, promoting localization to lipid droplets. Phosphorylation is followed by acetylation by KAT5, leading to dissociation of the homodimer into a monomer. Monomeric CHKA isoform 1 is converted into a tyrosine-protein kinase, which phosphorylates lipid droplet structural proteins PLIN2 and PLIN3, leading to lipolysis of lipid droplets. This chain is Choline kinase alpha (Chka), found in Rattus norvegicus (Rat).